The primary structure comprises 99 residues: Nucleoid-associated protein SUB1611 (99 aa).

The protein belongs to the YbaB/EbfC family. As to quaternary structure, homodimer.

It localises to the cytoplasm. The protein resides in the nucleoid. Its function is as follows. Binds to DNA and alters its conformation. May be involved in regulation of gene expression, nucleoid organization and DNA protection. This chain is Nucleoid-associated protein SUB1611, found in Streptococcus uberis (strain ATCC BAA-854 / 0140J).